The sequence spans 1780 residues: Chitin synthase Vb (1780 aa).

6 N-linked (GlcNAc...) asparagine glycosylation sites follow: Asn-133, Asn-153, Asn-629, Asn-644, Asn-655, and Asn-660. Transmembrane regions (helical) follow at residues 740–760 (AWIAFVWALTFWIPSPLLKFI) and 776–796 (FVLFFLIILINGMVVFWIIGF). Residues 805–866 (NKAWNVKEVA…LSGMVMDNYF (62 aa)) enclose the Cytochrome b5 heme-binding domain. N-linked (GlcNAc...) asparagine glycosylation is found at Asn-888 and Asn-1009. A helical membrane pass occupies residues 1046 to 1066 (LLLAFAIIICIVTAVKFLAAL). Asn-1411 carries an N-linked (GlcNAc...) asparagine glycan. 3 consecutive transmembrane segments (helical) span residues 1442 to 1462 (LCGTIILPSTCVYIGYLIYIL), 1469 to 1489 (IPYISLAMIGAVYGLQALIFI), and 1497 to 1517 (IGWMIIYILAFPIYSFILPLY). Asn-1524 carries an N-linked (GlcNAc...) asparagine glycan. The disordered stretch occupies residues 1649 to 1691 (TGVHDMRSQSPYQDYPGQHPSVSNLRGQANLSPATGGGHSRSG). The segment covering 1668–1681 (PSVSNLRGQANLSP) has biased composition (polar residues). The DEK-C domain maps to 1722 to 1778 (GPNDMAIVESIRSVLCEVDLDTVTKKQVRALVEQRLQTELVGERRTFMDRQIDHELE).

It belongs to the chitin synthase family. Class VII subfamily.

It localises to the cell membrane. The catalysed reaction is [(1-&gt;4)-N-acetyl-beta-D-glucosaminyl](n) + UDP-N-acetyl-alpha-D-glucosamine = [(1-&gt;4)-N-acetyl-beta-D-glucosaminyl](n+1) + UDP + H(+). Polymerizes chitin, a structural polymer of the cell wall and septum, by transferring the sugar moiety of UDP-GlcNAc to the non-reducing end of the growing chitin polymer. ChsV and chsVb do perform additive, but not redundant, functions in septum formation. Functions not only in the maintenance of cell wall integrity under different osmotic conditions but also in polarized cell wall synthesis. Plays an important role in the complex infection process of this fungus. This is Chitin synthase Vb from Fusarium oxysporum f. sp. lycopersici (strain 4287 / CBS 123668 / FGSC 9935 / NRRL 34936) (Fusarium vascular wilt of tomato).